Consider the following 694-residue polypeptide: Pentatricopeptide repeat-containing protein At3g12770 (694 aa).

PPR repeat units lie at residues 52–82 (SGFL…LPRP), 83–117 (QIFP…RVSP), 118–152 (DSFT…GFDA), 153–183 (DVFV…LPLP), 186–220 (TIVS…DVKP), 221–255 (DWVA…GLEI), 256–286 (EPDL…MKSP), 287–321 (NLIL…DVRP), 322–356 (DTIS…DYRD), 357–387 (DVFI…TLDR), 388–422 (DVVV…GVHP), 423–457 (NDVT…KINP), and 458–488 (QQQH…MPVQ). Residues 493–568 (VWGALLSACK…DVGCSWVEVR (76 aa)) are type E motif. A type E(+) motif region spans residues 569-599 (GRLEAFRVGDKSHPRYEEIERQVEWIESRLK). A type DYW motif region spans residues 600 to 694 (EGGFVANKDA…DGVCSCGDYW (95 aa)).

This sequence belongs to the PPR family. PCMP-H subfamily.

In Arabidopsis thaliana (Mouse-ear cress), this protein is Pentatricopeptide repeat-containing protein At3g12770 (PCMP-H43).